The following is a 264-amino-acid chain: Hydroxyethylthiazole kinase (264 aa).

M55 provides a ligand contact to substrate. ATP contacts are provided by R130 and S176. G203 lines the substrate pocket.

This sequence belongs to the Thz kinase family. The cofactor is Mg(2+).

It catalyses the reaction 5-(2-hydroxyethyl)-4-methylthiazole + ATP = 4-methyl-5-(2-phosphooxyethyl)-thiazole + ADP + H(+). The protein operates within cofactor biosynthesis; thiamine diphosphate biosynthesis; 4-methyl-5-(2-phosphoethyl)-thiazole from 5-(2-hydroxyethyl)-4-methylthiazole: step 1/1. In terms of biological role, catalyzes the phosphorylation of the hydroxyl group of 4-methyl-5-beta-hydroxyethylthiazole (THZ). This Leptospira borgpetersenii serovar Hardjo-bovis (strain JB197) protein is Hydroxyethylthiazole kinase.